The primary structure comprises 106 residues: UPF0060 membrane protein AZC_0909 (106 aa).

Transmembrane regions (helical) follow at residues 4–24, 27–47, 58–78, and 84–104; these read PLFA…WHVV, GGSP…AALL, AFAA…WAAE, and RFDA…LFAP.

The protein belongs to the UPF0060 family.

It is found in the cell inner membrane. The chain is UPF0060 membrane protein AZC_0909 from Azorhizobium caulinodans (strain ATCC 43989 / DSM 5975 / JCM 20966 / LMG 6465 / NBRC 14845 / NCIMB 13405 / ORS 571).